The chain runs to 478 residues: Methionine aminopeptidase 2 (478 aa).

Residues 1–123 are disordered; that stretch reads MAGVEEASSF…DPPSVPICDL (123 aa). The residue at position 2 (Ala-2) is an N-acetylalanine. Positions 36–46 are enriched in basic residues; it reads KKKRRKKKKGK. Positions 55-79 are enriched in basic and acidic residues; it reads ELDKESGTSVDEVAKQLERQALEEK. Phosphoserine; alternate is present on residues Ser-60 and Ser-63. Ser-60 and Ser-63 each carry an O-linked (GlcNAc) serine; alternate glycan. Acidic residues predominate over residues 80–92; the sequence is EKDDDDEDGDGDG. Residues 97–109 are compositionally biased toward basic residues; sequence GKKKKKKKKKRGP. His-231 is a binding site for substrate. The a divalent metal cation site is built by Asp-251, Asp-262, and His-331. A substrate-binding site is contributed by His-339. Glu-364 and Glu-459 together coordinate a divalent metal cation.

It belongs to the peptidase M24A family. Methionine aminopeptidase eukaryotic type 2 subfamily. In terms of assembly, binds EIF2S1 at low magnesium concentrations. Interacts strongly with the eIF-2 gamma-subunit EIF2S3. Co(2+) serves as cofactor. The cofactor is Zn(2+). Requires Mn(2+) as cofactor. Fe(2+) is required as a cofactor. O-glycosylated; contains 12 O-linked GlcNAc. Post-translationally, contains approximately 12 O-linked N-acetylglucosamine (GlcNAc) residues. O-glycosylation is required for EIF2S1 binding.

It localises to the cytoplasm. It catalyses the reaction Release of N-terminal amino acids, preferentially methionine, from peptides and arylamides.. Cotranslationally removes the N-terminal methionine from nascent proteins. The N-terminal methionine is often cleaved when the second residue in the primary sequence is small and uncharged (Met-Ala-, Cys, Gly, Pro, Ser, Thr, or Val). Functionally, protects eukaryotic initiation factor EIF2S1 from translation-inhibiting phosphorylation by inhibitory kinases such as EIF2AK2/PKR and EIF2AK1/HCR. Plays a critical role in the regulation of protein synthesis. This chain is Methionine aminopeptidase 2 (Metap2), found in Rattus norvegicus (Rat).